The following is a 561-amino-acid chain: MGILDSLKKPVNIKSSLPKFSRSATSINLSSHPVSSRSFLELPPELFSITKPIFKLLQAHANKIYFQSSDAEAVWNVKDSSGHVFEAESISLLGSHIIITNSSVQVADVAIIDSPSNINQCEISSVGEFLQFNNGQLSITCNDFGLLEKFKRLCMISIFEFISIYKALTGTVISSYGLRMSDMHIILNSPFNFKDWCEVYLDGQGWVKVWCHIDKVSKTNNSKSSSDNDAKGKYQIRFYRDDKSTSSKNCVFFIPDNEYVQDIFFYNINAAEPSKNMNDFFQGLQMIKLVGNVRFCSDTDFNDVVDSGSIYSSANNGSGDSSSTALNNESPNTTPKSRTFFSPKGHRRNSSHVSSLTSRSTKKPITNFTTRTNGLLIRPLPHHGVHHLEAMIRFIIPLMDCARLYGRPVQFKTERTDINSLMFGLPKLPSVDYFAEEEIAHLMTQEFNPLKEKDTDDTMALTMSRFSSYLQERMTKVSKRNTELNFRTFSDVMGMYNTTRDHSKLNCMSDKDNSVKEFSLSDKSNVSSETTNMMNQLQVNAHEYKSSMCERPIVASTSPIA.

The span at 314–323 (ANNGSGDSSS) shows a compositional bias: low complexity. The tract at residues 314-366 (ANNGSGDSSSTALNNESPNTTPKSRTFFSPKGHRRNSSHVSSLTSRSTKKPIT) is disordered. Over residues 324–340 (TALNNESPNTTPKSRTF) the composition is skewed to polar residues. S514 is modified (phosphoserine).

It localises to the cytoplasm. This is an uncharacterized protein from Saccharomyces cerevisiae (strain ATCC 204508 / S288c) (Baker's yeast).